The sequence spans 385 residues: Lipoyl synthase, mitochondrial (385 aa).

The segment at 18 to 40 is disordered; the sequence is TKAKNRTFSSSTVESSTKQPPQF. Residues Cys113, Cys118, Cys124, Cys144, Cys148, Cys151, and Ser360 each contribute to the [4Fe-4S] cluster site. One can recognise a Radical SAM core domain in the interval 129–349; it reads ETGTATATIM…KTLGMEMGFR (221 aa).

It belongs to the radical SAM superfamily. Lipoyl synthase family. [4Fe-4S] cluster serves as cofactor.

It is found in the mitochondrion. The catalysed reaction is [[Fe-S] cluster scaffold protein carrying a second [4Fe-4S](2+) cluster] + N(6)-octanoyl-L-lysyl-[protein] + 2 oxidized [2Fe-2S]-[ferredoxin] + 2 S-adenosyl-L-methionine + 4 H(+) = [[Fe-S] cluster scaffold protein] + N(6)-[(R)-dihydrolipoyl]-L-lysyl-[protein] + 4 Fe(3+) + 2 hydrogen sulfide + 2 5'-deoxyadenosine + 2 L-methionine + 2 reduced [2Fe-2S]-[ferredoxin]. It participates in protein modification; protein lipoylation via endogenous pathway; protein N(6)-(lipoyl)lysine from octanoyl-[acyl-carrier-protein]: step 2/2. In terms of biological role, catalyzes the radical-mediated insertion of two sulfur atoms into the C-6 and C-8 positions of the octanoyl moiety bound to the lipoyl domains of lipoate-dependent enzymes, thereby converting the octanoylated domains into lipoylated derivatives. The chain is Lipoyl synthase, mitochondrial from Populus trichocarpa (Western balsam poplar).